The following is a 768-amino-acid chain: Translation initiation factor IF-2, chloroplastic (768 aa).

Disordered regions lie at residues 1–20, 54–77, and 155–176; these read MFLNNQNFENRSSRSSSNIN, KSESHTGGEQHLELSSPPKLDKKS, and KKVAVTPSQNSASIQSNSPPES. Residues 54 to 65 show a composition bias toward basic and acidic residues; it reads KSESHTGGEQHL. A compositionally biased stretch (polar residues) spans 160–176; sequence TPSQNSASIQSNSPPES. Residues 261–434 enclose the tr-type G domain; sequence KRPPIVTVMG…TLLAELEDLK (174 aa). GTP is bound by residues 270 to 277, 320 to 324, and 374 to 377; these read GHVDHGKT, DTPGH, and SKID.

Belongs to the TRAFAC class translation factor GTPase superfamily. Classic translation factor GTPase family. IF-2 subfamily.

It localises to the plastid. The protein localises to the chloroplast. In terms of biological role, one of the essential components for the initiation of protein synthesis. Protects formylmethionyl-tRNA from spontaneous hydrolysis and promotes its binding to the 30S ribosomal subunits. Also involved in the hydrolysis of GTP during the formation of the 70S ribosomal complex. The protein is Translation initiation factor IF-2, chloroplastic (infB) of Pyropia yezoensis (Susabi-nori).